An 891-amino-acid polypeptide reads, in one-letter code: Valine--tRNA ligase (891 aa).

Residues 43 to 53 (PFTSGTLHLGH) carry the 'HIGH' region motif. Positions 536-540 (KMSKS) match the 'KMSKS' region motif. Lys539 contacts ATP.

Belongs to the class-I aminoacyl-tRNA synthetase family. ValS type 2 subfamily.

It localises to the cytoplasm. The enzyme catalyses tRNA(Val) + L-valine + ATP = L-valyl-tRNA(Val) + AMP + diphosphate. Functionally, catalyzes the attachment of valine to tRNA(Val). As ValRS can inadvertently accommodate and process structurally similar amino acids such as threonine, to avoid such errors, it has a 'posttransfer' editing activity that hydrolyzes mischarged Thr-tRNA(Val) in a tRNA-dependent manner. The chain is Valine--tRNA ligase from Pyrococcus furiosus (strain ATCC 43587 / DSM 3638 / JCM 8422 / Vc1).